The primary structure comprises 462 residues: Argininosuccinate lyase (462 aa).

The protein belongs to the lyase 1 family. Argininosuccinate lyase subfamily.

The protein resides in the cytoplasm. It carries out the reaction 2-(N(omega)-L-arginino)succinate = fumarate + L-arginine. Its pathway is amino-acid biosynthesis; L-arginine biosynthesis; L-arginine from L-ornithine and carbamoyl phosphate: step 3/3. This Exiguobacterium sp. (strain ATCC BAA-1283 / AT1b) protein is Argininosuccinate lyase.